A 697-amino-acid polypeptide reads, in one-letter code: Putative cryptochrome DASH (697 aa).

The Photolyase/cryptochrome alpha/beta domain occupies 5-164 (KLLVYLLRRD…GFKLWHDEKY (160 aa)). Disordered regions lie at residues 170–215 (DNGL…FPSW) and 554–697 (FSVT…PPHI). Positions 188 to 198 (KTQEPLRERPR) are enriched in basic and acidic residues. Residues 560–569 (RGNRRPYRWR) show a composition bias toward basic residues. Gly residues predominate over residues 578 to 590 (GRGGRGGGTGNTS). Low complexity-rich tracts occupy residues 659–675 (QQQQ…YAHQ) and 683–697 (RQQQ…PPHI).

Belongs to the DNA photolyase class-1 family. Requires FAD as cofactor. The cofactor is (6R)-5,10-methylene-5,6,7,8-tetrahydrofolate.

In terms of biological role, may have a photoreceptor function. In Gibberella zeae (strain ATCC MYA-4620 / CBS 123657 / FGSC 9075 / NRRL 31084 / PH-1) (Wheat head blight fungus), this protein is Putative cryptochrome DASH.